We begin with the raw amino-acid sequence, 108 residues long: UPF0145 protein LCABL_07110 (108 aa).

This sequence belongs to the UPF0145 family.

The polypeptide is UPF0145 protein LCABL_07110 (Lacticaseibacillus casei (strain BL23) (Lactobacillus casei)).